The primary structure comprises 637 residues: Penicillin-binding protein 1A (637 aa).

The transglycosylase stretch occupies residues 62–224 (LIADLGSERR…NQYDPYSHPE (163 aa)). Glu-91 functions as the Proton donor; for transglycosylase activity in the catalytic mechanism. The segment at 298–612 (EVYTNVDSKV…RLTPIVGDGF (315 aa)) is transpeptidase. Residue Ser-371 is the Acyl-ester intermediate; for transpeptidase activity of the active site.

In the N-terminal section; belongs to the glycosyltransferase 51 family. This sequence in the C-terminal section; belongs to the transpeptidase family.

Its subcellular location is the secreted. It catalyses the reaction [GlcNAc-(1-&gt;4)-Mur2Ac(oyl-L-Ala-gamma-D-Glu-L-Lys-D-Ala-D-Ala)](n)-di-trans,octa-cis-undecaprenyl diphosphate + beta-D-GlcNAc-(1-&gt;4)-Mur2Ac(oyl-L-Ala-gamma-D-Glu-L-Lys-D-Ala-D-Ala)-di-trans,octa-cis-undecaprenyl diphosphate = [GlcNAc-(1-&gt;4)-Mur2Ac(oyl-L-Ala-gamma-D-Glu-L-Lys-D-Ala-D-Ala)](n+1)-di-trans,octa-cis-undecaprenyl diphosphate + di-trans,octa-cis-undecaprenyl diphosphate + H(+). It carries out the reaction Preferential cleavage: (Ac)2-L-Lys-D-Ala-|-D-Ala. Also transpeptidation of peptidyl-alanyl moieties that are N-acyl substituents of D-alanine.. The protein operates within cell wall biogenesis; peptidoglycan biosynthesis. In terms of biological role, cell wall formation. The polypeptide is Penicillin-binding protein 1A (ponA) (Streptococcus oralis).